We begin with the raw amino-acid sequence, 56 residues long: MAKKKKTSQKWKLYEVKGGKVVRKNKFCPRCGPGVFMANHKDRWSCGRCGYTEWKK.

Positions 28, 31, 46, and 49 each coordinate Zn(2+). The segment at 28–49 (CPRCGPGVFMANHKDRWSCGRC) adopts a C4-type zinc-finger fold.

Belongs to the eukaryotic ribosomal protein eS31 family. As to quaternary structure, part of the 30S ribosomal subunit. Zn(2+) serves as cofactor.

The protein is Small ribosomal subunit protein eS31 of Thermococcus gammatolerans (strain DSM 15229 / JCM 11827 / EJ3).